The following is a 285-amino-acid chain: Probable xyloglucan endotransglucosylase/hydrolase protein 12 (285 aa).

Positions 1 to 25 are cleaved as a signal peptide; it reads MAAFATKQSPLLLASLLILIGVATG. In terms of domain architecture, GH16 spans 26 to 215; the sequence is SFYDSFDITW…WTNAPFSASY (190 aa). Catalysis depends on E101, which acts as the Nucleophile. The active-site Proton donor is E105. E105 serves as a coordination point for xyloglucan. A glycan (N-linked (GlcNAc...) asparagine) is linked at N109. Xyloglucan contacts are provided by residues 118 to 120, 128 to 130, 194 to 195, and G199; these read HTN, NRE, and DW. Cystine bridges form between C224–C235 and C268–C282. R273 lines the xyloglucan pocket.

Belongs to the glycosyl hydrolase 16 family. XTH group 2 subfamily. Contains at least one intrachain disulfide bond essential for its enzymatic activity. Root specific.

The protein resides in the secreted. Its subcellular location is the cell wall. It localises to the extracellular space. It is found in the apoplast. It carries out the reaction breaks a beta-(1-&gt;4) bond in the backbone of a xyloglucan and transfers the xyloglucanyl segment on to O-4 of the non-reducing terminal glucose residue of an acceptor, which can be a xyloglucan or an oligosaccharide of xyloglucan.. Functionally, catalyzes xyloglucan endohydrolysis (XEH) and/or endotransglycosylation (XET). Cleaves and religates xyloglucan polymers, an essential constituent of the primary cell wall, and thereby participates in cell wall construction of growing tissues. This Arabidopsis thaliana (Mouse-ear cress) protein is Probable xyloglucan endotransglucosylase/hydrolase protein 12 (XTH12).